Reading from the N-terminus, the 427-residue chain is Glutamate-1-semialdehyde 2,1-aminomutase (427 aa).

Lys267 carries the post-translational modification N6-(pyridoxal phosphate)lysine.

This sequence belongs to the class-III pyridoxal-phosphate-dependent aminotransferase family. HemL subfamily. In terms of assembly, homodimer. Pyridoxal 5'-phosphate serves as cofactor.

The protein localises to the cytoplasm. The enzyme catalyses (S)-4-amino-5-oxopentanoate = 5-aminolevulinate. It participates in porphyrin-containing compound metabolism; protoporphyrin-IX biosynthesis; 5-aminolevulinate from L-glutamyl-tRNA(Glu): step 2/2. The sequence is that of Glutamate-1-semialdehyde 2,1-aminomutase from Acetivibrio thermocellus (strain ATCC 27405 / DSM 1237 / JCM 9322 / NBRC 103400 / NCIMB 10682 / NRRL B-4536 / VPI 7372) (Clostridium thermocellum).